A 36-amino-acid polypeptide reads, in one-letter code: Collagen alpha-2(I) chain (36 aa).

Positions 1–36 (GSNGEPGSAGPPGPAGLRGLPGESGAVGPAGPPGSR) are disordered. A 4-hydroxyproline mark is found at Pro6 and Pro12. Low complexity predominate over residues 15–29 (AGLRGLPGESGAVGP). Pro33 is modified (4-hydroxyproline).

The protein belongs to the fibrillar collagen family. Trimers of one alpha 2(I) and two alpha 1(I) chains. In terms of processing, proline residues at the third position of the tripeptide repeating unit (G-X-Y) are hydroxylated in some or all of the chains.

The protein resides in the secreted. It localises to the extracellular space. Its subcellular location is the extracellular matrix. In terms of biological role, type I collagen is a member of group I collagen (fibrillar forming collagen). This Brachylophosaurus canadensis (Campanian hadrosaur) protein is Collagen alpha-2(I) chain.